We begin with the raw amino-acid sequence, 397 residues long: Argininosuccinate synthase (397 aa).

Residue 8-16 (AYSGGLDTS) coordinates ATP. L-citrulline-binding residues include Tyr-86 and Ser-91. Gly-116 provides a ligand contact to ATP. The L-aspartate site is built by Thr-118, Asn-122, and Asp-123. Position 122 (Asn-122) interacts with L-citrulline. L-citrulline contacts are provided by Arg-126, Ser-175, Ser-184, Glu-260, and Tyr-272.

The protein belongs to the argininosuccinate synthase family. Type 1 subfamily. As to quaternary structure, homotetramer.

The protein localises to the cytoplasm. The enzyme catalyses L-citrulline + L-aspartate + ATP = 2-(N(omega)-L-arginino)succinate + AMP + diphosphate + H(+). The protein operates within amino-acid biosynthesis; L-arginine biosynthesis; L-arginine from L-ornithine and carbamoyl phosphate: step 2/3. This chain is Argininosuccinate synthase, found in Clostridium botulinum (strain 657 / Type Ba4).